Here is a 243-residue protein sequence, read N- to C-terminus: GrpE protein homolog, mitochondrial (243 aa).

The segment at 56–79 (KKEEPKDENDAAAAEEDANLTEEQ) is disordered.

The protein belongs to the GrpE family. As to quaternary structure, component of the PAM complex, at least composed of mtHsp70, MGE1, TIM44, PAM16, PAM17 and PAM18.

It localises to the mitochondrion matrix. Its function is as follows. Essential component of the PAM complex, a complex required for the translocation of transit peptide-containing proteins from the inner membrane into the mitochondrial matrix in an ATP-dependent manner. Seems to control the nucleotide-dependent binding of SSC1 to substrate proteins. In Kluyveromyces lactis (strain ATCC 8585 / CBS 2359 / DSM 70799 / NBRC 1267 / NRRL Y-1140 / WM37) (Yeast), this protein is GrpE protein homolog, mitochondrial (mge1).